A 255-amino-acid chain; its full sequence is Electron transfer flavoprotein beta subunit lysine methyltransferase (255 aa).

Residues 1–32 constitute a mitochondrion transit peptide; it reads MAFSLCWKAPRSQWSFLQALNSGFPLFPWRTV.

It belongs to the methyltransferase superfamily. ETFBKMT family. In terms of assembly, interacts with HSPD1; this protein may possibly be a methylation substrate.

The protein resides in the cytoplasm. It is found in the mitochondrion matrix. It carries out the reaction L-lysyl-[protein] + 3 S-adenosyl-L-methionine = N(6),N(6),N(6)-trimethyl-L-lysyl-[protein] + 3 S-adenosyl-L-homocysteine + 3 H(+). Protein-lysine methyltransferase that selectively trimethylates the flavoprotein ETFB in mitochondria. Thereby, may negatively regulate the function of ETFB in electron transfer from Acyl-CoA dehydrogenases to the main respiratory chain. The polypeptide is Electron transfer flavoprotein beta subunit lysine methyltransferase (Rattus norvegicus (Rat)).